We begin with the raw amino-acid sequence, 426 residues long: 3-phosphoshikimate 1-carboxyvinyltransferase (426 aa).

Positions 22, 23, and 27 each coordinate 3-phosphoshikimate. Lys22 contributes to the phosphoenolpyruvate binding site. Positions 96 and 124 each coordinate phosphoenolpyruvate. 3-phosphoshikimate-binding residues include Ser170, Ser171, Gln172, Ser198, Asp314, Asn337, and Lys341. Gln172 is a phosphoenolpyruvate binding site. Residue Asp314 is the Proton acceptor of the active site. The phosphoenolpyruvate site is built by Arg345, Arg387, and Lys412.

The protein belongs to the EPSP synthase family. In terms of assembly, monomer.

It is found in the cytoplasm. It carries out the reaction 3-phosphoshikimate + phosphoenolpyruvate = 5-O-(1-carboxyvinyl)-3-phosphoshikimate + phosphate. Its pathway is metabolic intermediate biosynthesis; chorismate biosynthesis; chorismate from D-erythrose 4-phosphate and phosphoenolpyruvate: step 6/7. In terms of biological role, catalyzes the transfer of the enolpyruvyl moiety of phosphoenolpyruvate (PEP) to the 5-hydroxyl of shikimate-3-phosphate (S3P) to produce enolpyruvyl shikimate-3-phosphate and inorganic phosphate. The chain is 3-phosphoshikimate 1-carboxyvinyltransferase from Shewanella baltica (strain OS185).